Reading from the N-terminus, the 92-residue chain is Small ribosomal subunit protein uS19 (92 aa).

It belongs to the universal ribosomal protein uS19 family.

In terms of biological role, protein S19 forms a complex with S13 that binds strongly to the 16S ribosomal RNA. This is Small ribosomal subunit protein uS19 from Bacillus mycoides (strain KBAB4) (Bacillus weihenstephanensis).